The sequence spans 398 residues: Elongation factor Tu (398 aa).

Residues 10–207 (KPHVNIGTIG…TVDSYIPEPE (198 aa)) form the tr-type G domain. The tract at residues 19-26 (GHVDHGKT) is G1. GTP is bound at residue 19 to 26 (GHVDHGKT). Threonine 26 contributes to the Mg(2+) binding site. The G2 stretch occupies residues 63-67 (GITIN). The G3 stretch occupies residues 84–87 (DAPG). Residues 84 to 88 (DAPGH) and 139 to 142 (NKVD) contribute to the GTP site. The tract at residues 139-142 (NKVD) is G4. Residues 177–179 (SAL) form a G5 region.

It belongs to the TRAFAC class translation factor GTPase superfamily. Classic translation factor GTPase family. EF-Tu/EF-1A subfamily. Monomer.

The protein localises to the cytoplasm. The catalysed reaction is GTP + H2O = GDP + phosphate + H(+). Functionally, GTP hydrolase that promotes the GTP-dependent binding of aminoacyl-tRNA to the A-site of ribosomes during protein biosynthesis. The sequence is that of Elongation factor Tu from Streptococcus pyogenes serotype M1.